Reading from the N-terminus, the 2493-residue chain is Adenylate cyclase (2493 aa).

Polar residues-rich tracts occupy residues 1 to 18 (MLFTMQFTTRSTVASPEQ), 42 to 51 (RDSNGSSNFT), 60 to 78 (SQQYDDTSTNSFHSSQPDI), 129 to 147 (PANSHSDSLPGPSTHSISP), and 197 to 210 (APFSSSHSNRTSVN). Disordered stretches follow at residues 1–85 (MLFT…SSTL), 99–148 (FEHA…ISPS), 197–325 (APFS…SSLS), 355–444 (NSPS…QSQS), 475–565 (GSIT…VNML), 616–660 (QAPV…KTSY), 753–832 (NVGE…GSKS), 854–882 (ALVQQQSQSQNHHQPSPNVRPTSRGGAGA), and 904–967 (RPSK…ATGT). The segment covering 211–233 (PSAASTASPSTSAATRTRPRGGT) has biased composition (low complexity). 2 stretches are compositionally biased toward polar residues: residues 234–246 (NASQYNTLDTSFG) and 253–264 (LSSSRSQYSLRP). 2 stretches are compositionally biased toward basic residues: residues 287 to 303 (AVKKTRNPFGFLKKKSS) and 404 to 422 (HLKKDPRKRIKGVRHHLAK). Residues 425-434 (KPGEDADSAR) show a composition bias toward basic and acidic residues. Residues 500-525 (PSPSQTPIAERQTSVTSTVESPSHAS) show a composition bias toward polar residues. A compositionally biased stretch (low complexity) spans 534 to 555 (SLRTPSRTTASTSTSSASTVLS). Over residues 630–640 (TDSELSDRKDS) the composition is skewed to basic and acidic residues. Over residues 641–660 (VVSTHSMRSNHSGISPKTSY) the composition is skewed to polar residues. Positions 754–763 (VGEEEDDDDD) are enriched in acidic residues. Composition is skewed to low complexity over residues 780 to 791 (SSSGISSTHASS) and 854 to 870 (ALVQQQSQSQNHHQPSP). Polar residues predominate over residues 913-935 (RPNTAGSVGATRPSTTTLGSTLS). The region spanning 970–1072 (RNHFIRVYKT…LRFVFRPDSV (103 aa)) is the Ras-associating domain. LRR repeat units lie at residues 1086-1107 (TFQHLDLHSRNLEMVPIFLYKH), 1110-1132 (WIVSLDLSGNPMSDLPLDFVQLC), 1134-1155 (SLRTLRLSNLALKRIPQSVRHS), 1157-1178 (TLTHLDVSNNRIVELAHVSLDL), 1181-1202 (ELMSLKVQNNRLFDLPSYFSSI), 1204-1225 (TLRNLNISNNRFEEFPKVICDV), 1227-1248 (SLVDLDVSFNSITELPAEIANL), 1250-1271 (NLERFILAGNELEKLPDSMSEL), 1273-1294 (SLRTIDLRRNKVQDVSSLLGLP), 1295-1316 (RLQNIQAESNNIKSFEATLGPQ), 1317-1336 (LTQVELGRNPLSKVRIAALT), 1339-1360 (DLTSLDLSSTNMTRLEEGLFPQ), 1363-1385 (ALVKLTLDGNQLVVLPDTLGDLK), 1386-1407 (RLEMLSCSNNLLATLPESIGDL), 1409-1430 (ALKELLVHNNNLKTLPQTLWLC), 1432-1453 (SLAHINLSSNLLESFPAVPDIR), 1511-1534 (SLQKLRLGDNRLGDDVFSVLSELT), 1535-1556 (SLEVLNLSFNEIFEIPDFSLQT), 1559-1580 (KLRELYISGNQLSTIPSDDLVV), 1583-1605 (ELRILHLNCNKLTTLPTELGKLK), 1606-1628 (KLANLDVGNNVLKYNIANWHYDW), and 1635-1654 (ELRYLNLSGNTRLEIKTKLS). The PPM-type phosphatase domain maps to 1710 to 2000 (AYGIADALGK…ESIMVMVISV (291 aa)). The Guanylate cyclase domain maps to 2058–2194 (ALVFTDIKNS…PMVNRAARIS (137 aa)). Residues D2063 and D2105 each coordinate Mg(2+). Disordered stretches follow at residues 2220–2241 (DESSTAGGAGGEGENLEKTEEE), 2354–2378 (EADRSQPSTPLDDNGRNPIDGHGTA), and 2467–2493 (PPRASTSALSLPSPRTSPRNRLLELVP). Over residues 2470 to 2485 (ASTSALSLPSPRTSPR) the composition is skewed to polar residues.

It belongs to the adenylyl cyclase class-3 family. Requires Mg(2+) as cofactor.

It carries out the reaction ATP = 3',5'-cyclic AMP + diphosphate. Plays essential roles in regulation of cellular metabolism by catalyzing the synthesis of a second messenger, cAMP. This Mycosarcoma maydis (Corn smut fungus) protein is Adenylate cyclase (UAC1).